A 651-amino-acid polypeptide reads, in one-letter code: Acetyl-coenzyme A synthetase (651 aa).

Residues 189–192 (RGGK), Thr311, and Asn335 contribute to the CoA site. ATP contacts are provided by residues 387-389 (GEP), 411-416 (DTWWQT), Asp500, and Arg515. Ser523 is a CoA binding site. Arg526 is an ATP binding site. Mg(2+) contacts are provided by Val537, His539, and Val542. CoA is bound at residue Arg584. The residue at position 609 (Lys609) is an N6-acetyllysine.

This sequence belongs to the ATP-dependent AMP-binding enzyme family. Mg(2+) serves as cofactor. Acetylated. Deacetylation by the SIR2-homolog deacetylase activates the enzyme.

The enzyme catalyses acetate + ATP + CoA = acetyl-CoA + AMP + diphosphate. In terms of biological role, catalyzes the conversion of acetate into acetyl-CoA (AcCoA), an essential intermediate at the junction of anabolic and catabolic pathways. AcsA undergoes a two-step reaction. In the first half reaction, AcsA combines acetate with ATP to form acetyl-adenylate (AcAMP) intermediate. In the second half reaction, it can then transfer the acetyl group from AcAMP to the sulfhydryl group of CoA, forming the product AcCoA. The polypeptide is Acetyl-coenzyme A synthetase (Rhizobium etli (strain ATCC 51251 / DSM 11541 / JCM 21823 / NBRC 15573 / CFN 42)).